The chain runs to 429 residues: Gap junction gamma-2 protein (429 aa).

Topologically, residues M1 to K25 are cytoplasmic. A helical membrane pass occupies residues V26 to I46. Residues Y47–R78 are Extracellular-facing. The helical transmembrane segment at F79 to V99 threads the bilayer. The Cytoplasmic portion of the chain corresponds to H100–Q214. The tract at residues S106–R200 is disordered. The segment covering R112 to P123 has biased composition (basic residues). The span at R124–P138 shows a compositional bias: pro residues. Residues D142–D173 show a composition bias toward acidic residues. A helical membrane pass occupies residues L215 to F235. At E236–T263 the chain is on the extracellular side. Residues V264 to M284 form a helical membrane-spanning segment. At A285–I429 the chain is on the cytoplasmic side. 2 disordered regions span residues V296–A316 and L361–I429. The span at P303–A316 shows a compositional bias: pro residues. Position 366 is a phosphoserine (S366). Low complexity predominate over residues L372–G395.

It belongs to the connexin family. Gamma-type subfamily. As to quaternary structure, a connexon is composed of a hexamer of connexins. Interacts with TJP1.

Its subcellular location is the cell membrane. It is found in the cell junction. It localises to the gap junction. In terms of biological role, one gap junction consists of a cluster of closely packed pairs of transmembrane channels, the connexons, through which materials of low MW diffuse from one cell to a neighboring cell. May play a role in myelination in central and peripheral nervous systems. The sequence is that of Gap junction gamma-2 protein (GJC2) from Bos taurus (Bovine).